A 716-amino-acid polypeptide reads, in one-letter code: Hepatocyte growth factor-like protein (716 aa).

A signal peptide spans 1–18 (MGWLPLLLLLVQCSRALG). Positions 19-105 (QRSPLNDFQL…SLCHLFQKKD (87 aa)) constitute a PAN domain. Intrachain disulfides connect Cys56/Cys78, Cys60/Cys66, Cys110/Cys186, Cys131/Cys169, Cys157/Cys181, Cys191/Cys268, Cys194/Cys333, Cys212/Cys251, Cys240/Cys263, Cys292/Cys370, Cys313/Cys352, Cys341/Cys364, Cys379/Cys457, Cys400/Cys440, Cys428/Cys452, Cys477/Cys593, Cys512/Cys528, Cys607/Cys672, Cys637/Cys651, and Cys662/Cys690. N-linked (GlcNAc...) asparagine glycosylation is present at Asn72. Kringle domains are found at residues 110-186 (CIMD…IKTC), 191-268 (CVLC…LPSC), 292-370 (CFRG…IPRC), and 379-457 (CYHG…LQRC). An N-linked (GlcNAc...) asparagine glycan is attached at Asn173. Residue Asn305 is glycosylated (N-linked (GlcNAc...) asparagine). Residues 489–714 (VVGGHPGNSP…FVDWINKVMQ (226 aa)) enclose the Peptidase S1 domain. An N-linked (GlcNAc...) asparagine glycan is attached at Asn620.

Belongs to the peptidase S1 family. Plasminogen subfamily. As to quaternary structure, dimer of an alpha chain and a beta chain linked by a disulfide bond. Interacts (via beta chain) with MST1R (via SEMA domain). Cleaved after Arg-488, probably by HPN/Hepsin, to yield the active form consisting of two disulfide-linked chains. As to expression, liver. Lower levels in lung, placenta and adrenal.

The protein resides in the secreted. This is Hepatocyte growth factor-like protein (Mst1) from Mus musculus (Mouse).